Here is a 470-residue protein sequence, read N- to C-terminus: Zinc finger protein weckle (470 aa).

The required for homodimerization stretch occupies residues 1–103 (MGVPTSDWIY…DALRLEYGLP (103 aa)). The region spanning 10-82 (YWCRLCARDD…SKVQAIFELL (73 aa)) is the ZAD domain. Zn(2+)-binding residues include Cys12, Cys15, Cys55, and Cys58. Residues 156-265 (NSDPKVLASP…LSMSPHGSQS (110 aa)) are disordered. Ser168 is subject to Phosphoserine. Residues 195-208 (ESDDEEAILDEDEA) show a composition bias toward acidic residues. Residues 214–225 (LKRKRGRPKGSG) show a composition bias toward basic residues. Positions 237 to 254 (TSREPDDNAKSKQDDKTS) are enriched in basic and acidic residues. Positions 255-265 (ELSMSPHGSQS) are enriched in polar residues. 6 consecutive C2H2-type zinc fingers follow at residues 271–294 (YPCK…HDMH), 300–322 (YVCD…QLVH), 328–350 (CICP…SQTH), 355–377 (FECN…KYVH), 383–405 (FKCE…LLGH), and 411–434 (YVCK…WKKH).

As to quaternary structure, homodimer. Interacts with Myd88 and Toll.

It localises to the cell membrane. Functionally, acts as an adapter to assemble/stabilize a Toll/wek/Myd88/tube complex; required for efficient recruitment of Myd88 to Toll. Dispensable for innate immune response; plays a minimal role, if any, in the immune defense against Gram-positive bacteria and fungi. Involved in dorsoventral axis determination. This chain is Zinc finger protein weckle, found in Drosophila melanogaster (Fruit fly).